A 281-amino-acid chain; its full sequence is Endochitinase B (281 aa).

An N-terminal signal peptide occupies residues 1-33; sequence MAMAKAGAPRVSAAQLVTLGLSLLCAVAGPAAA. Residues 34–68 enclose the Chitin-binding type-1 domain; it reads QNCGCQPNVCCSKFGYCGTTDEYCGDGCQSGPCRS. Cystine bridges form between Cys36/Cys44, Cys38/Cys50, Cys43/Cys57, and Cys61/Cys66. The tract at residues 69-78 is hinge region (Gly-rich); the sequence is GGGGSSGGGG. Residues 79–281 are catalytic; sequence ANVASVVTGS…GVDPGPNLTC (203 aa). Cys101 and Cys150 are oxidised to a cystine. Glu145 serves as the catalytic Proton donor. N-linked (GlcNAc...) asparagine glycosylation is present at Asn156. 2 disulfide bridges follow: Cys162–Cys171 and Cys249–Cys281. An N-linked (GlcNAc...) asparagine glycan is attached at Asn278.

This sequence belongs to the glycosyl hydrolase 19 family. Chitinase class I subfamily.

The protein resides in the secreted. The enzyme catalyses Random endo-hydrolysis of N-acetyl-beta-D-glucosaminide (1-&gt;4)-beta-linkages in chitin and chitodextrins.. In terms of biological role, defense against chitin-containing fungal pathogens. Its action is countered by fungal polyglycine hydrolases, that cleaves within its hinge region (Gly-rich) to disrupt chitin-binding. In Zea mays (Maize), this protein is Endochitinase B.